The sequence spans 679 residues: Glycine--tRNA ligase beta subunit (679 aa).

Belongs to the class-II aminoacyl-tRNA synthetase family. Tetramer of two alpha and two beta subunits.

Its subcellular location is the cytoplasm. It carries out the reaction tRNA(Gly) + glycine + ATP = glycyl-tRNA(Gly) + AMP + diphosphate. This Streptococcus pyogenes serotype M6 (strain ATCC BAA-946 / MGAS10394) protein is Glycine--tRNA ligase beta subunit.